The sequence spans 516 residues: Exoglucanase 1 (516 aa).

Positions 1–17 (MRASLLAFSLAAAVAGG) are cleaved as a signal peptide. Residues 18–445 (QQAGTLTAKR…GHLGISPFSG (428 aa)) are catalytic. Asn45 carries an N-linked (GlcNAc...) asparagine glycan. The active-site Nucleophile is Glu223. The active-site Proton donor is the Glu228. A glycan (N-linked (GlcNAc...) asparagine) is linked at Asn281. The interval 444–481 (SGGSSGTPPSNPSSSASPTSSTAKPSSTSTASNPSGTG) is disordered. The segment at 446 to 480 (GSSGTPPSNPSSSASPTSSTAKPSSTSTASNPSGT) is linker. The segment covering 449–481 (GTPPSNPSSSASPTSSTAKPSSTSTASNPSGTG) has biased composition (low complexity). The region spanning 480-516 (TGAAHWAQCGGIGFSGPTTCPEPYTCAKDHDIYSQCV) is the CBM1 domain. Disulfide bonds link Cys488–Cys505 and Cys499–Cys515.

It belongs to the glycosyl hydrolase 7 (cellulase C) family.

It localises to the secreted. It catalyses the reaction Hydrolysis of (1-&gt;4)-beta-D-glucosidic linkages in cellulose and cellotetraose, releasing cellobiose from the non-reducing ends of the chains.. The protein is Exoglucanase 1 (cbh-1) of Neurospora crassa (strain ATCC 24698 / 74-OR23-1A / CBS 708.71 / DSM 1257 / FGSC 987).